The chain runs to 660 residues: Methionine--tRNA ligase (660 aa).

Residues 11-21 (PYANGPCHLGH) carry the 'HIGH' region motif. Residues cysteine 143, cysteine 146, cysteine 155, and cysteine 158 each coordinate Zn(2+). The 'KMSKS' region signature appears at 325–329 (KMSTS). Threonine 328 is an ATP binding site. A tRNA-binding domain is found at 563-660 (DFDKVVIKIG…DECEVGERIQ (98 aa)).

It belongs to the class-I aminoacyl-tRNA synthetase family. MetG type 1 subfamily. As to quaternary structure, homodimer. The cofactor is Zn(2+).

The protein resides in the cytoplasm. It carries out the reaction tRNA(Met) + L-methionine + ATP = L-methionyl-tRNA(Met) + AMP + diphosphate. Is required not only for elongation of protein synthesis but also for the initiation of all mRNA translation through initiator tRNA(fMet) aminoacylation. The protein is Methionine--tRNA ligase of Methanobrevibacter smithii (strain ATCC 35061 / DSM 861 / OCM 144 / PS).